The primary structure comprises 240 residues: Myogenic factor 6 (240 aa).

One can recognise a bHLH domain in the interval 91–142; it reads DRRKAATLRERRRLKKINEAFEALKRRTVANPNQRLPKVEILRSAINYIERL.

As to quaternary structure, efficient DNA binding requires dimerization with another bHLH protein. As to expression, skeletal muscle.

Its subcellular location is the nucleus. Functionally, involved in muscle differentiation (myogenic factor). Induces fibroblasts to differentiate into myoblasts. Probable sequence specific DNA-binding protein. This chain is Myogenic factor 6 (myf6), found in Xenopus laevis (African clawed frog).